Reading from the N-terminus, the 467-residue chain is Nuclear pore complex protein Nup50 (467 aa).

Residues 1-14 (MAKRVAEKELTDRN) are compositionally biased toward basic and acidic residues. Residues 1-20 (MAKRVAEKELTDRNWDEEDE) are disordered. The residue at position 8 (lysine 8) is an N6-acetyllysine. Serine 52 carries the post-translational modification Phosphoserine. Copy 1 of the repeat occupies 76-77 (FG). The segment at 76–303 (FGGGSGGKPL…FSPGNSSLFG (228 aa)) is 5 X 2 AA repeats of F-G. An N6-acetyllysine modification is found at lysine 83. Residues 84-103 (PLEGLTNGNSTDSATPFSSA) form a disordered region. The span at 89–103 (TNGNSTDSATPFSSA) shows a compositional bias: polar residues. Residues 113 to 114 (FG) form repeat 2. Lysine 127 is subject to N6-acetyllysine. Disordered stretches follow at residues 129–151 (ISSPKCNSSNQPPSSGPASSTSC) and 201–248 (LENG…EDTS). Positions 132–151 (PKCNSSNQPPSSGPASSTSC) are enriched in polar residues. The segment at 144 to 206 (GPASSTSCTG…IEKQLENGGS (63 aa)) is binding to CDKN1B. The residue at position 209 (serine 209) is a Phosphoserine. The stretch at 226–227 (FG) is repeat 3. Residues 226–236 (FGSTKLQQDSP) are compositionally biased toward polar residues. Serine 235 is subject to Phosphoserine. The residue at position 247 (threonine 247) is a Phosphothreonine. Phosphoserine is present on serine 269. Residues 272-273 (FG) form repeat 4. Serine 295 is subject to Phosphoserine. Repeat unit 5 spans residues 302-303 (FG). Positions 313–330 (SSPFSAKASESQAGGSSS) are enriched in low complexity. A disordered region spans residues 313–348 (SSPFSAKASESQAGGSSSECRDGEEEESDEPPKVVV). Positions 334–467 (DGEEEESDEP…HKILLQKKDV (134 aa)) constitute a RanBD1 domain. Lysine 352 is covalently cross-linked (Glycyl lysine isopeptide (Lys-Gly) (interchain with G-Cter in SUMO2)). N6-acetyllysine is present on lysine 449.

In terms of assembly, does not interact with TPR. Interacts with Importin alpha-2, Importin beta, Importin beta-2, NUP153, Ran binding protein 7, CDKN1B and itself. Highly expressed in testis, intermediate levels in kidney, liver, spleen and low basal levels in somatic cells. Expression in testis undergoes changes and subcellular localization during germ cell differentiation.

The protein resides in the nucleus. It localises to the nuclear pore complex. Its subcellular location is the nucleus membrane. Its function is as follows. Component of the nuclear pore complex that has a direct role in nuclear protein import. Actively displaces NLSs from importin-alpha, and facilitates disassembly of the importin-alpha:beta-cargo complex and importin recycling. Interacts with regulatory proteins of cell cycle progression including CDKN1B. This interaction is required for correct intracellular transport and degradation of CDKN1B. The polypeptide is Nuclear pore complex protein Nup50 (Nup50) (Rattus norvegicus (Rat)).